We begin with the raw amino-acid sequence, 905 residues long: Nitrate reductase [NADPH] (905 aa).

The tract at residues 1–42 (METSTTTTLLQQERIPENSEPISTHIHTHSLPPTPPGTAKPS) is disordered. C179 contributes to the Mo-molybdopterin binding site. The Cytochrome b5 heme-binding domain maps to 546-621 (NRKITIEELK…LPTYHIGTLD (76 aa)). 2 residues coordinate heme: H581 and H604. The FAD-binding FR-type domain occupies 648 to 759 (KTWSKAILDK…KGPTGKFVYH (112 aa)). FAD is bound by residues 702–705 (RSYT), 719–723 (LIKIY), 733–735 (VMT), S783, and T786. 875–884 (LLLVCGPPPM) serves as a coordination point for NADP(+).

The protein belongs to the nitrate reductase family. In terms of assembly, homodimer. FAD is required as a cofactor. It depends on heme as a cofactor. The cofactor is Mo-molybdopterin.

It carries out the reaction nitrite + NADP(+) + H2O = nitrate + NADPH + H(+). Its function is as follows. Nitrate reductase is a key enzyme involved in the first step of nitrate assimilation in plants, fungi and bacteria. This is Nitrate reductase [NADPH] (NIA) from Fusarium oxysporum (Fusarium vascular wilt).